We begin with the raw amino-acid sequence, 308 residues long: MKVLLANPRGFCAGVDRAIEIVECALKLHGAPVYVRHEVVHNKFVVDGLKNKGAVFVEDIADVPNNQVVIFSAHGVSIAVRRQTHNIGAIIYDATCPLVTKVHKEVARKQKQNYQVILIGHKGHPEVEGTLGQSSESNCVQLVETIEDVERLNLSKNMSFSYTTQTTLSIDDTQSIIDYLKLRIPTIDMPKKDDICYATQNRQDAVKILMQFSSVLLILGSSNSSNSNRLREIAEKIGIPAYLIDGIDNIDELWFKGVDTIGVTAGASAPEVLVQEVVHYLRDKGATKVIEVGGVKENIHFPVPKELR.

[4Fe-4S] cluster is bound at residue cysteine 12. (2E)-4-hydroxy-3-methylbut-2-enyl diphosphate contacts are provided by histidine 41 and histidine 74. The dimethylallyl diphosphate site is built by histidine 41 and histidine 74. Residues histidine 41 and histidine 74 each contribute to the isopentenyl diphosphate site. Position 96 (cysteine 96) interacts with [4Fe-4S] cluster. (2E)-4-hydroxy-3-methylbut-2-enyl diphosphate is bound at residue histidine 124. Histidine 124 provides a ligand contact to dimethylallyl diphosphate. Histidine 124 serves as a coordination point for isopentenyl diphosphate. Glutamate 126 functions as the Proton donor in the catalytic mechanism. Position 166 (threonine 166) interacts with (2E)-4-hydroxy-3-methylbut-2-enyl diphosphate. Cysteine 196 is a binding site for [4Fe-4S] cluster. Residues serine 224, serine 225, asparagine 226, and serine 268 each contribute to the (2E)-4-hydroxy-3-methylbut-2-enyl diphosphate site. Residues serine 224, serine 225, asparagine 226, and serine 268 each coordinate dimethylallyl diphosphate. 4 residues coordinate isopentenyl diphosphate: serine 224, serine 225, asparagine 226, and serine 268.

The protein belongs to the IspH family. [4Fe-4S] cluster is required as a cofactor.

It carries out the reaction isopentenyl diphosphate + 2 oxidized [2Fe-2S]-[ferredoxin] + H2O = (2E)-4-hydroxy-3-methylbut-2-enyl diphosphate + 2 reduced [2Fe-2S]-[ferredoxin] + 2 H(+). It catalyses the reaction dimethylallyl diphosphate + 2 oxidized [2Fe-2S]-[ferredoxin] + H2O = (2E)-4-hydroxy-3-methylbut-2-enyl diphosphate + 2 reduced [2Fe-2S]-[ferredoxin] + 2 H(+). It functions in the pathway isoprenoid biosynthesis; dimethylallyl diphosphate biosynthesis; dimethylallyl diphosphate from (2E)-4-hydroxy-3-methylbutenyl diphosphate: step 1/1. The protein operates within isoprenoid biosynthesis; isopentenyl diphosphate biosynthesis via DXP pathway; isopentenyl diphosphate from 1-deoxy-D-xylulose 5-phosphate: step 6/6. Catalyzes the conversion of 1-hydroxy-2-methyl-2-(E)-butenyl 4-diphosphate (HMBPP) into a mixture of isopentenyl diphosphate (IPP) and dimethylallyl diphosphate (DMAPP). Acts in the terminal step of the DOXP/MEP pathway for isoprenoid precursor biosynthesis. The protein is 4-hydroxy-3-methylbut-2-enyl diphosphate reductase of Vesicomyosocius okutanii subsp. Calyptogena okutanii (strain HA).